The sequence spans 338 residues: Calcium uniporter protein 4, mitochondrial (338 aa).

A mitochondrion-targeting transit peptide spans 1 to 36 (MVMMKKLLSNRLFNMSKTASQSLMNCRTSSSSSLAM). Residues 233–253 (LWAGLGYLIIQTAGFMRLTFW) form a helical membrane-spanning segment. The short motif at 257-265 (WDVMEPICF) is the Selectivity filter element. Glu261 is a Ca(2+) binding site. The chain crosses the membrane as a helical span at residues 263-280 (ICFYVSSVYFMAGYTFFL).

Belongs to the MCU (TC 1.A.77) family.

The protein localises to the mitochondrion inner membrane. It catalyses the reaction Ca(2+)(in) = Ca(2+)(out). Mitochondrial inner membrane calcium uniporter that mediates calcium uptake into mitochondria. Constitutes a pore-forming and calcium-conducting subunit. Mitochondrial calcium homeostasis plays key roles in cellular physiology and regulates cell bioenergetics, cytoplasmic calcium signals and activation of cell death pathways. This Arabidopsis thaliana (Mouse-ear cress) protein is Calcium uniporter protein 4, mitochondrial.